Consider the following 305-residue polypeptide: Coiled-coil domain-containing protein 50 (305 aa).

Ala-2 bears the N-acetylalanine mark. A Phosphoserine modification is found at Ser-5. Positions 86 to 130 (EIAQEIQEKLTIEAERRRIQEKKDEDIARLLQEKELQEEKRRKKH) form a coiled coil. Disordered regions lie at residues 122–142 (QEEKRRKKHTPEFSGGSVFGD) and 218–305 (KKAK…HNKQ). 2 stretches are compositionally biased toward basic and acidic residues: residues 218 to 239 (KKAKEREKSSLDKRKHDPECKL) and 247 to 263 (KSKEGDEAHRSKIDRPS). Over residues 279–305 (THFTNQHSTTWHLPKSESSQKGFHNKQ) the composition is skewed to polar residues.

Interacts with RNF126. In terms of processing, phosphorylated on tyrosine residues. Widely expressed.

The protein resides in the cytoplasm. Functionally, involved in EGFR signaling. The sequence is that of Coiled-coil domain-containing protein 50 (Ccdc50) from Mus musculus (Mouse).